An 8525-amino-acid chain; its full sequence is Nebulin (8525 aa).

Residues 34 to 70 (TTTTRTSDYEQSETSKPALAQPALAQPASAKPVERRK) are disordered. Low complexity predominate over residues 48-64 (SKPALAQPALAQPASAK). 235 Nebulin repeats span residues 83–110 (TPYI…KTKG), 112–146 (PYAS…VAKT), 156–181 (DIEH…DTKD), 182–216 (KYLL…ADKS), 217–251 (LFYP…EQQA), 252–286 (QFTP…NKIK), 296–321 (EVAN…NMKD), 323–357 (IYFM…KNKG), 362–396 (NVLP…KTKA), 403–431 (ETPK…KDIL), 433–467 (HYVG…EDRG), 501–535 (KFTQ…SEKF), 536–570 (KCHI…KSKA), 572–606 (KFDI…KNKG), 610–644 (GVLS…KTKA), 680–714 (HYVG…EDKG), 748–782 (KFTA…GEKF), 783–817 (KCHI…KSKA), 819–853 (KFDI…KSKG), 857–891 (GALS…KSKT), 892–918 (IYTA…VDYK), 923–957 (SYSY…SWMK), 968–986 (EMEK…KYRQ), 992–1026 (KFTS…EIIH), 1027–1061 (KYNL…DLSK), 1063–1097 (GYDL…KAKG), 1101–1135 (GFQS…KTKS), 1136–1166 (KYNT…HSLH), 1167–1201 (HYTY…NWMK), 1212–1230 (DVEK…KYRQ), 1236–1270 (KFTS…DVKH), 1271–1305 (KYTM…DLIA), 1307–1341 (GNNV…KSKG), 1345–1379 (GFRS…NTKT), 1380–1407 (SYHT…NYKQ), 1411–1445 (HYTY…SFLK), 1456–1474 (EVEK…KYRQ), 1480–1514 (KFTS…KLKH), 1515–1549 (KYTI…KTIA), 1551–1585 (GYDL…KAKG), 1589–1623 (GFLS…ASKT), 1624–1654 (KYHT…QSYH), 1655–1689 (HYTL…NWMK), 1697–1725 (ESLE…KLKF), 1730–1758 (DTME…KDKT), 1759–1793 (TIHV…EEKK), 1795–1829 (GYDL…QAKG), 1833–1867 (GFRS…KSKT), 1868–1894 (SFHT…ANYR), 1899–1933 (TYNM…DFMK), 1949–1962 (KKAM…KYRQ), 1968–2002 (KYST…ADKT), 2003–2037 (KVHI…ESKK), 2039–2073 (GYDL…KGKG), 2077–2111 (GFRS…NTKT), 2112–2138 (SYHT…TNYK), 2143–2177 (KYIL…EWYK), 2188–2206 (EVEK…KYRQ), 2212–2246 (QFKK…KDKT), 2247–2281 (KIHV…EALK), 2283–2317 (GYDL…KQLG), 2321–2355 (GFRS…KWKT), 2356–2382 (KFSS…VDYK), 2387–2421 (QWTC…WLRG), 2436–2449 (KRAS…KYRQ), 2455–2489 (KFTS…KDKT), 2490–2524 (QIHI…ELKR), 2526–2560 (GYDL…KQLG), 2564–2598 (GARN…KWKT), 2599–2625 (KFSS…VDYK), 2630–2664 (QWTC…WLKG), 2679–2692 (KRAT…VYRQ), 2698–2732 (KFSS…KDKT), 2733–2767 (TVHI…EAKR), 2769–2803 (GYDM…KQLG), 2807–2841 (GARA…KWKT), 2842–2868 (KFSS…VDYK), 2873–2907 (QWTC…WMRG), 2917–2935 (DVEK…IYRQ), 2941–2975 (KFTS…KDKT), 2976–3010 (QIHI…EAKK), 3012–3046 (GYDL…KQLG), 3050–3084 (GARN…KWKT), 3085–3111 (KFSS…VDYK), 3116–3150 (EWTC…WLRG), 3158–3178 (SMDV…IYRQ), 3184–3218 (KFTS…KDKT), 3219–3253 (QIHI…EAKK), 3255–3289 (GYDL…KQLG), 3293–3327 (GARN…KWKT), 3328–3354 (KFSS…VDYK), 3359–3393 (EWTC…WLRG), 3401–3421 (SMDV…IYRQ), 3427–3461 (KFTS…KDKT), 3462–3496 (QVHI…EAKK), 3498–3532 (GYDL…KQLG), 3536–3570 (GARA…KYKT), 3571–3597 (RYSS…VDYK), 3602–3636 (EWIC…WMKG), 3643–3664 (DSLE…IYRQ), 3670–3704 (KFTS…NDKK), 3705–3739 (TIHV…ESKK), 3741–3775 (GYDL…KQLG), 3779–3813 (GARN…KWKT), 3814–3840 (KFSS…IDYK), 3845–3879 (EWTC…WLRG), 3889–3907 (EVEK…KYRQ), 3913–3947 (KFTC…ADKT), 3948–3982 (SIHV…ESKM), 3984–4018 (DYDL…KQKG), 4022–4056 (GAQS…KWKT), 4057–4083 (KFSS…IDYR), 4088–4122 (EWTC…WLRG), 4132–4149 (EMNR…RLYR), 4156–4190 (SFTS…KDKS), 4191–4225 (NITI…DAKQ), 4227–4261 (GYDI…KQLG), 4265–4299 (GFRT…KSKG), 4300–4326 (IHNT…IDYR), 4331–4365 (QWTC…WLKG), 4375–4392 (EVMR…RLYR), 4399–4433 (KFTS…KEKA), 4434–4468 (NVNV…DVKM), 4470–4504 (GYDL…KQKG), 4508–4542 (GCRS…DHKA), 4543–4569 (KISI…VDYR), 4574–4608 (HWSC…WLRG), 4618–4635 (EMNR…RLYR), 4642–4676 (SFTS…KDKS), 4677–4711 (NITI…DTKQ), 4713–4747 (GYDI…KQLG), 4751–4785 (GFRT…KSKG), 4786–4812 (IHNT…IDYR), 4817–4851 (QWTC…WLKG), 4861–4878 (EVMR…RLYR), 4885–4919 (KFTS…KEKA), 4920–4954 (NVNV…DVKM), 4956–4990 (GYDL…KQKG), 4994–5028 (GCRS…DHKA), 5029–5055 (KISI…VDYR), 5060–5094 (HWSC…WLRG), 5104–5121 (EMNR…RLYR), 5128–5162 (SFTS…KDKS), 5163–5197 (NITI…DTKQ), 5199–5233 (GYDI…KQLG), 5237–5271 (GFRT…KSKG), 5272–5298 (IHNT…IDYR), 5303–5337 (QWTC…WLKG), 5347–5364 (EVMR…RLYR), 5371–5405 (KFTS…KEKA), 5406–5440 (NVNV…DVKM), 5442–5476 (GYDL…KQKG), 5480–5514 (GCRS…DHKA), 5515–5541 (KISI…VDYR), 5546–5580 (RWSC…WLRG), 5588–5607 (SPEV…SVYR), 5614–5648 (KYTS…KDKT), 5649–5683 (SIHI…EMKA), 5690–5718 (DAIP…KQKG), 5722–5756 (GTLT…KWKA), 5757–5783 (KIQS…MDYR), 5788–5822 (QWTC…WLRG), 5829–5853 (DSVS…TKIE), 5856–5890 (NFTP…ATKS), 5893–5924 (TLTE…RQKA), 5926–5960 (GYIL…KQKG), 5964–5998 (GVPT…KTKA), 5999–6025 (KINI…IDYR), 6030–6064 (QWMC…WLRG), 6071–6099 (DSVD…ENYP), 6100–6134 (NFRS…KAKG), 6135–6169 (KYTF…GTKA), 6171–6205 (GYTL…KQKG), 6209–6243 (AGKV…DTKA), 6244–6274 (NVHI…HYFH), 6275–6309 (QWTS…WLKG), 6316–6344 (DTPQ…ENLQ), 6345–6379 (NYNL…QIKD), 6380–6414 (KYTT…RVKA), 6416–6450 (SYIL…KFKA), 6458–6488 (VDDD…KNKM), 6489–6515 (KIHI…IDYR), 6532–6554 (HVRK…WLKG), 6561–6589 (DTPE…KTRN), 6590–6624 (DYKL…HSVR), 6626–6660 (KVAP…TLPT), 6661–6695 (GYRL…HTKA), 6697–6731 (GYTL…KLKD), 6732–6766 (KIHT…KMQG), 6767–6801 (HMIS…VLKG), 6808–6836 (DTPD…KMRD), 6837–6871 (KYKV…KQKS), 6872–6906 (IFTS…KERP), 6907–6941 (HHHA…KMKD), 6942–6976 (KYTP…KTKG), 6977–7011 (KYHT…SQLG), 7012–7046 (IWRS…WLKG), 7053–7081 (DTPD…RTKS), 7082–7110 (DFKY…YKSS), 7125–7151 (PDML…KSKD), 7152–7186 (KFTS…KAKP), 7188–7222 (GYTT…RNKS), 7223–7257 (NCTI…ANKA), 7258–7292 (HWKW…FLKG), 7297–7327 (VTDD…KERG), 7328–7362 (TCHA…KHLA), 7365–7399 (SYTT…KEKG), 7402–7433 (NYSI…DAKE), 7436–7470 (HYTT…KEGS), 7479–7505 (PDIE…KEKG), 7514–7542 (DSQL…KLHK), 7543–7577 (PVTD…KSKG), 7578–7612 (HYHT…KERG), 7619–7647 (ETPT…ESIK), 7650–7684 (NLTG…ESIR), 7687–7721 (GLTE…LEVK), 7731–7759 (ETPD…MEKA), 7760–7794 (NFTS…KSMS), 7795–7829 (YYET…NSKG), 7830–7864 (KITV…PGTA), 7867–7888 (KTPE…KYKE), 7892–7921 (QGTP…KENL), 7930–7957 (TPEI…KGIP), 7961–7988 (TPEM…KGTP), 7992–8013 (TPEM…YKEN), 8016–8045 (KGIP…KENL), 8054–8075 (TPEM…YKEN), 8078–8112 (KGTP…KGTP), 8116–8143 (TPEM…KGTP), 8147–8168 (TPEM…YKEN), 8171–8205 (KATA…KATP), 8209–8232 (TPEM…ENMR), 8233–8267 (KATP…KQIQ), 8269–8303 (KAAY…KHKG), and 8304–8330 (CFTP…INYR). The tract at residues 8313-8468 (ITERVKKNMQ…SIPSHPSTAG (156 aa)) is interaction with SVIL. Disordered stretches follow at residues 8385–8422 (QAQR…LSTY) and 8439–8463 (TTEL…IPSH). The span at 8405–8419 (GEEKSEHSEAPDHHL) shows a compositional bias: basic and acidic residues. Positions 8444-8459 (QQRSSSVATQQTTVSS) are enriched in low complexity. Residues 8466–8525 (TAGKIFRAMYDYMAADADEVSFKDGDAIINVQAIDEGWMYGTVQRTGRTGMLPANYVEAI) form the SH3 domain.

In terms of assembly, monomer and homooligomer. Interacts with TTN/titin. Interacts with SVIL. Interacts (via nebulin repeats 160-164) with DES. Expressed in skeletal muscle (at protein level). Located in the thin filament of striated muscle.

It is found in the cytoplasm. Its subcellular location is the myofibril. The protein resides in the sarcomere. It localises to the cytoskeleton. Its function is as follows. This giant muscle protein may be involved in maintaining the structural integrity of sarcomeres and the membrane system associated with the myofibrils. Binds and stabilize F-actin. This Homo sapiens (Human) protein is Nebulin (NEB).